A 96-amino-acid chain; its full sequence is ATP synthase subunit e, mitochondrial (96 aa).

At serine 2 the chain carries N-acetylserine.

The protein belongs to the ATPase e subunit family. In terms of assembly, F-type ATPases have 2 components, CF(1) - the catalytic core - and CF(0) - the membrane proton channel. In yeast, the dimeric form of ATP synthase consists of 17 polypeptides: alpha, beta, gamma, delta, epsilon, 4 (B), 5 (OSCP), 6 (A), 8, 9 (C), d, E (Tim11), f, g, h, i/j and k.

It is found in the mitochondrion. It localises to the mitochondrion inner membrane. In terms of biological role, mitochondrial membrane ATP synthase (F(1)F(0) ATP synthase or Complex V) produces ATP from ADP in the presence of a proton gradient across the membrane which is generated by electron transport complexes of the respiratory chain. F-type ATPases consist of two structural domains, F(1) - containing the extramembraneous catalytic core, and F(0) - containing the membrane proton channel, linked together by a central stalk and a peripheral stalk. During catalysis, ATP synthesis in the catalytic domain of F(1) is coupled via a rotary mechanism of the central stalk subunits to proton translocation. Part of the complex F(0) domain. Minor subunit located with subunit a in the membrane. In Saccharomyces cerevisiae (strain ATCC 204508 / S288c) (Baker's yeast), this protein is ATP synthase subunit e, mitochondrial (TIM11).